A 626-amino-acid chain; its full sequence is Leucine aminopeptidase 2-1 (626 aa).

Residues 134-136 (QCQ) and 259-264 (PYGGME) each bind substrate. H288 is a Zn(2+) binding site. Residue E289 is the Proton acceptor of the active site. The Zn(2+) site is built by H292 and E311. Catalysis depends on Y389, which acts as the Proton donor.

The protein belongs to the peptidase M1 family. Zn(2+) is required as a cofactor.

Its subcellular location is the cytoplasm. The protein resides in the nucleus. The enzyme catalyses an epoxide + H2O = an ethanediol. Aminopeptidase that preferentially cleaves di- and tripeptides. Also has low epoxide hydrolase activity (in vitro). Can hydrolyze the epoxide leukotriene LTA(4) but it forms preferentially 5,6-dihydroxy-7,9,11,14-eicosatetraenoic acid rather than the cytokine leukotriene B(4) as the product compared to the homologous mammalian enzyme (in vitro). The chain is Leucine aminopeptidase 2-1 (LKA4) from Scheffersomyces stipitis (strain ATCC 58785 / CBS 6054 / NBRC 10063 / NRRL Y-11545) (Yeast).